The sequence spans 180 residues: Translation initiation factor IF-3 (180 aa).

Belongs to the IF-3 family. As to quaternary structure, monomer.

The protein localises to the cytoplasm. In terms of biological role, IF-3 binds to the 30S ribosomal subunit and shifts the equilibrium between 70S ribosomes and their 50S and 30S subunits in favor of the free subunits, thus enhancing the availability of 30S subunits on which protein synthesis initiation begins. The chain is Translation initiation factor IF-3 from Klebsiella pneumoniae.